The following is a 126-amino-acid chain: Urease subunit beta (126 aa).

This sequence belongs to the urease beta subunit family. In terms of assembly, heterotrimer of UreA (gamma), UreB (beta) and UreC (alpha) subunits. Three heterotrimers associate to form the active enzyme.

Its subcellular location is the cytoplasm. The enzyme catalyses urea + 2 H2O + H(+) = hydrogencarbonate + 2 NH4(+). The protein operates within nitrogen metabolism; urea degradation; CO(2) and NH(3) from urea (urease route): step 1/1. In Haloquadratum walsbyi (strain DSM 16790 / HBSQ001), this protein is Urease subunit beta.